The primary structure comprises 217 residues: Protein LURP-one-related 2 (217 aa).

It belongs to the LOR family.

In terms of biological role, might be related to the phospholipid scramblase and tubby-like superfamily of membrane tethered transcription factors. The sequence is that of Protein LURP-one-related 2 from Arabidopsis thaliana (Mouse-ear cress).